Consider the following 579-residue polypeptide: Pentatricopeptide repeat-containing protein At2g15690, mitochondrial (579 aa).

The transit peptide at 1–49 (MSSLMAIRCARTQNIVTIGSLLQLRSSFPRLSSQFHFSGTLNSIPIKHL) directs the protein to the mitochondrion. 2 stretches are compositionally biased toward polar residues: residues 56–71 (NDYH…SQHQ) and 78–103 (SFDS…TQHG). Residues 56–208 (NDYHQNPQSG…QMNEVAPPPS (153 aa)) are disordered. 2 stretches are compositionally biased toward low complexity: residues 117–136 (GGQR…QMSQ) and 148–199 (RPQY…SPNQ). 5 PPR repeats span residues 235–269 (DREC…KFRG), 270–300 (DPKL…MVDK), 301–335 (DMDS…GLKP), 336–371 (NEET…GISP), and 372–402 (KTEH…LPFE). The segment at 485–579 (GVVYVPDTRF…DGKCSCGDYW (95 aa)) is type DYW motif.

Belongs to the PPR family. PCMP-H subfamily.

The protein resides in the mitochondrion. In Arabidopsis thaliana (Mouse-ear cress), this protein is Pentatricopeptide repeat-containing protein At2g15690, mitochondrial (PCMP-H66).